The primary structure comprises 132 residues: Large ribosomal subunit protein bL17 (132 aa).

The protein belongs to the bacterial ribosomal protein bL17 family. As to quaternary structure, part of the 50S ribosomal subunit. Contacts protein L32.

The polypeptide is Large ribosomal subunit protein bL17 (Albidiferax ferrireducens (strain ATCC BAA-621 / DSM 15236 / T118) (Rhodoferax ferrireducens)).